The chain runs to 395 residues: Xylose isomerase (395 aa).

Residues His-54 and Glu-57 contribute to the active site. The segment at 80-108 is disordered; that stretch reads AVPAGAGRDRHEGADGDDEPVHAPGCSRD. Residues Glu-189, Glu-225, His-228, Asp-253, Asp-263, Asp-265, and Asp-295 each contribute to the Mg(2+) site.

The protein belongs to the xylose isomerase family. In terms of assembly, homotetramer. Mg(2+) serves as cofactor.

The protein localises to the cytoplasm. The enzyme catalyses alpha-D-xylose = alpha-D-xylulofuranose. The chain is Xylose isomerase from Streptomyces lividans.